Consider the following 174-residue polypeptide: RNA pyrophosphohydrolase (174 aa).

Positions 6–149 (GFRANVGIII…KRDVYRKVMK (144 aa)) constitute a Nudix hydrolase domain. The Nudix box signature appears at 38-59 (GGVDDGESAEEAMYRELYEEVG).

The protein belongs to the Nudix hydrolase family. RppH subfamily. Requires a divalent metal cation as cofactor.

Accelerates the degradation of transcripts by removing pyrophosphate from the 5'-end of triphosphorylated RNA, leading to a more labile monophosphorylated state that can stimulate subsequent ribonuclease cleavage. This is RNA pyrophosphohydrolase from Shewanella sp. (strain ANA-3).